A 410-amino-acid chain; its full sequence is Squalene synthase 1 (410 aa).

Position 2 is an N-acetylglycine (Gly-2). The next 2 helical transmembrane spans lie at 283-303 (SIFR…ALCY) and 387-407 (QPNS…FAYL).

The protein belongs to the phytoene/squalene synthase family. It depends on Mg(2+) as a cofactor. The cofactor is Mn(2+). Expressed in all tissues analyzed (seedlings, cotyledons, inflorescences, siliques, leaves, stems and roots). Highly expressed in roots and pollen.

Its subcellular location is the endoplasmic reticulum membrane. The enzyme catalyses 2 (2E,6E)-farnesyl diphosphate + NADPH + H(+) = squalene + 2 diphosphate + NADP(+). It carries out the reaction 2 (2E,6E)-farnesyl diphosphate + NADH + H(+) = squalene + 2 diphosphate + NAD(+). Its pathway is terpene metabolism; lanosterol biosynthesis; lanosterol from farnesyl diphosphate: step 1/3. The polypeptide is Squalene synthase 1 (Arabidopsis thaliana (Mouse-ear cress)).